Here is a 123-residue protein sequence, read N- to C-terminus: Large ribosomal subunit protein bL12 (123 aa).

The protein belongs to the bacterial ribosomal protein bL12 family. As to quaternary structure, homodimer. Part of the ribosomal stalk of the 50S ribosomal subunit. Forms a multimeric L10(L12)X complex, where L10 forms an elongated spine to which 2 to 4 L12 dimers bind in a sequential fashion. Binds GTP-bound translation factors.

Its function is as follows. Forms part of the ribosomal stalk which helps the ribosome interact with GTP-bound translation factors. Is thus essential for accurate translation. This Marinomonas sp. (strain MWYL1) protein is Large ribosomal subunit protein bL12.